The sequence spans 126 residues: uncharacterized protein (126 aa).

Residues 1–27 (MSKSKTPNFDDMEVLDDTNDEYDDSES) form a disordered region. Residues 10-27 (DDMEVLDDTNDEYDDSES) show a composition bias toward acidic residues.

This is an uncharacterized protein from Halorubrum sp. PV6 (HRPV-1).